The following is a 92-amino-acid chain: Non-specific lipid-transfer protein A (92 aa).

4 disulfide bridges follow: Cys-3/Cys-51, Cys-13/Cys-28, Cys-29/Cys-74, and Cys-49/Cys-88.

Belongs to the plant LTP family.

Its function is as follows. Plant non-specific lipid-transfer proteins transfer phospholipids as well as galactolipids across membranes. May play a role in wax or cutin deposition in the cell walls of expanding epidermal cells and certain secretory tissues. This is Non-specific lipid-transfer protein A from Ricinus communis (Castor bean).